A 206-amino-acid chain; its full sequence is Holliday junction branch migration complex subunit RuvA (206 aa).

The interval 1-63 (MIASLRGTVI…EDAMKLYGFI (63 aa)) is domain I. The tract at residues 64–142 (DNESREMFSV…AFAAGVVDEG (79 aa)) is domain II. Positions 143 to 153 (GEQISLPNANI) are flexible linker. The segment at 154 to 206 (ASEVVVEQVSQALVGLGFSEKQSDDAVSFVLAADPSLDTSGALRAALAKLSGK) is domain III.

This sequence belongs to the RuvA family. As to quaternary structure, homotetramer. Forms an RuvA(8)-RuvB(12)-Holliday junction (HJ) complex. HJ DNA is sandwiched between 2 RuvA tetramers; dsDNA enters through RuvA and exits via RuvB. An RuvB hexamer assembles on each DNA strand where it exits the tetramer. Each RuvB hexamer is contacted by two RuvA subunits (via domain III) on 2 adjacent RuvB subunits; this complex drives branch migration. In the full resolvosome a probable DNA-RuvA(4)-RuvB(12)-RuvC(2) complex forms which resolves the HJ.

Its subcellular location is the cytoplasm. The RuvA-RuvB-RuvC complex processes Holliday junction (HJ) DNA during genetic recombination and DNA repair, while the RuvA-RuvB complex plays an important role in the rescue of blocked DNA replication forks via replication fork reversal (RFR). RuvA specifically binds to HJ cruciform DNA, conferring on it an open structure. The RuvB hexamer acts as an ATP-dependent pump, pulling dsDNA into and through the RuvAB complex. HJ branch migration allows RuvC to scan DNA until it finds its consensus sequence, where it cleaves and resolves the cruciform DNA. The protein is Holliday junction branch migration complex subunit RuvA of Corynebacterium glutamicum (strain ATCC 13032 / DSM 20300 / JCM 1318 / BCRC 11384 / CCUG 27702 / LMG 3730 / NBRC 12168 / NCIMB 10025 / NRRL B-2784 / 534).